We begin with the raw amino-acid sequence, 339 residues long: DNA-directed RNA polymerase subunit alpha (339 aa).

Residues 1 to 235 (MVIQKNWQEL…DQLQVFVNFE (235 aa)) form an alpha N-terminal domain (alpha-NTD) region. The interval 251–339 (FNPALLKKVD…DLAKRFEEHY (89 aa)) is alpha C-terminal domain (alpha-CTD).

The protein belongs to the RNA polymerase alpha chain family. In terms of assembly, homodimer. The RNAP catalytic core consists of 2 alpha, 1 beta, 1 beta' and 1 omega subunit. When a sigma factor is associated with the core the holoenzyme is formed, which can initiate transcription.

The enzyme catalyses RNA(n) + a ribonucleoside 5'-triphosphate = RNA(n+1) + diphosphate. DNA-dependent RNA polymerase catalyzes the transcription of DNA into RNA using the four ribonucleoside triphosphates as substrates. This chain is DNA-directed RNA polymerase subunit alpha, found in Methylorubrum populi (strain ATCC BAA-705 / NCIMB 13946 / BJ001) (Methylobacterium populi).